We begin with the raw amino-acid sequence, 276 residues long: Undecaprenyl-diphosphatase (276 aa).

Helical transmembrane passes span 84 to 104 (YRLGWYVIIGTIPICVLGLLF), 115 to 135 (LWVVATALVVFSGVIALAEYL), 188 to 208 (FGFLLAIPAVFASGLFSLPDA), 222 to 242 (QLLVATLIAFVVGLAAVSWFL), and 250 to 270 (MYWFVGYRVVVGVVVLILLAT).

Belongs to the UppP family.

The protein localises to the cell membrane. The catalysed reaction is di-trans,octa-cis-undecaprenyl diphosphate + H2O = di-trans,octa-cis-undecaprenyl phosphate + phosphate + H(+). In terms of biological role, catalyzes the dephosphorylation of undecaprenyl diphosphate (UPP). Confers resistance to bacitracin. The polypeptide is Undecaprenyl-diphosphatase (Mycobacterium ulcerans (strain Agy99)).